We begin with the raw amino-acid sequence, 107 residues long: Serine-rich and transmembrane domain-containing protein 1 (107 aa).

A helical membrane pass occupies residues 43 to 63; that stretch reads IYVSIFLSLLAFLLLLLIIAL.

The protein localises to the membrane. The chain is Serine-rich and transmembrane domain-containing protein 1 (Sertm1) from Mus musculus (Mouse).